The chain runs to 309 residues: Homoserine kinase (309 aa).

91 to 101 provides a ligand contact to ATP; sequence PIGSGLGSSAC.

Belongs to the GHMP kinase family. Homoserine kinase subfamily.

The protein localises to the cytoplasm. The enzyme catalyses L-homoserine + ATP = O-phospho-L-homoserine + ADP + H(+). It functions in the pathway amino-acid biosynthesis; L-threonine biosynthesis; L-threonine from L-aspartate: step 4/5. Catalyzes the ATP-dependent phosphorylation of L-homoserine to L-homoserine phosphate. This Pectobacterium atrosepticum (strain SCRI 1043 / ATCC BAA-672) (Erwinia carotovora subsp. atroseptica) protein is Homoserine kinase.